Here is a 272-residue protein sequence, read N- to C-terminus: Homeobox protein SIX3 (272 aa).

A DNA-binding region (homeobox) is located at residues 169-228 (GEQKTHCFKERTRGLLREWYLQDPYPNPGKKRELAHATGLTPTQVGNWFKNRRQRDRAAA). Residues 244–272 (CTLSGGDSSERADGDTFLSVTDSDSDLDV) form a disordered region.

The protein belongs to the SIX/Sine oculis homeobox family. Interacts with GMNN.

The protein resides in the nucleus. Functionally, transcriptional regulator which can act as both a transcriptional repressor and activator by binding a ATTA homeodomain core recognition sequence on these target genes. During forebrain development represses WNT1 expression allowing zona limitans intrathalamica formation and thereby ensuring proper anterio-posterior patterning of the diencephalon and formation of the rostral diencephalon. Acts as a direct upstream activator of SHH expression in the rostral diencephalon ventral midline and that in turn SHH maintains its expression. In addition, Six3 activity is required for the formation of the telencephalon. During postnatal stages of brain development is necessary for ependymal cell maturation by promoting the maturation of radial glia into ependymal cells through regulation of neuroblast proliferation and migration. Acts on the proliferation and differentiation of neural progenitor cells through activating transcription of CCND1 and CCND2. During early lens formation plays a role in lens induction and specification by activating directly PAX6 in the presumptive lens ectoderm. In turn PAX6 activates SIX3 resulting in activation of PDGFRA and CCND1 promoting cell proliferation. Also is required for the neuroretina development by directly suppressing WNT8B expression in the anterior neural plate territory. Its action during retina development and lens morphogenesis is AES and TLE4-dependent manner. Furthermore, during eye development regulates several genes expression. Before and during early lens development represses the CRYGF promoter by binding a SIX repressor element. Directly activates RHO transcription, or cooperates with CRX or NRL. Six3 also functions in the formation of the proximodistal axis of the optic cup, and promotes the formation of optic vesicles-like structures. During pituitary development, acts in parallel or alternatively with HESX1 to control cell proliferation through Wnt/beta-catenin pathway. Plays a role in eye development by suppressing WNT1 expression and in dorsal-ventral patterning by repressing BMP signaling pathway. This chain is Homeobox protein SIX3 (six3), found in Oryzias latipes (Japanese rice fish).